We begin with the raw amino-acid sequence, 64 residues long: LKDGYIVDDVNCTYFCGRNAYCNEECIKLKGESGYCQWASPYGNACYCYKLPDHVRTKGPGRCN.

One can recognise an LCN-type CS-alpha/beta domain in the interval 2–64 (KDGYIVDDVN…VRTKGPGRCN (63 aa)). Disulfide bonds link C12-C63, C16-C36, C22-C46, and C26-C48.

It belongs to the long (4 C-C) scorpion toxin superfamily. Sodium channel inhibitor family. Alpha subfamily. In terms of tissue distribution, expressed by the venom gland.

The protein resides in the secreted. In terms of biological role, alpha toxins bind voltage-independently at site-3 of sodium channels (Nav) and inhibit the inactivation of the activated channels, thereby blocking neuronal transmission. This toxin is active against mammals. The recombinant toxin selectively inhibits the fast inactivation of hNav1.7/SCN9A channel (EC(50)=136.7 nM). Is potent in inhibiting the fast inactivation of hNav1.7 and has little effect on the steady-state inactivation. In vivo, intravenous injection into mice induces muscle contraction, leading to severe paralysis and death. The sequence is that of Alpha-mammal toxin AnCra1 from Androctonus crassicauda (Arabian fat-tailed scorpion).